We begin with the raw amino-acid sequence, 66 residues long: Large ribosomal subunit protein bL33c (66 aa).

Belongs to the bacterial ribosomal protein bL33 family.

It localises to the plastid. It is found in the chloroplast. The chain is Large ribosomal subunit protein bL33c from Ceratophyllum demersum (Rigid hornwort).